Consider the following 106-residue polypeptide: uncharacterized protein (106 aa).

Disordered regions lie at residues 33–64 and 87–106; these read FKTS…SRND and NLTG…AVSK. A compositionally biased stretch (basic and acidic residues) spans 52 to 63; the sequence is DGKKQESLESRN. A compositionally biased stretch (polar residues) spans 87–99; that stretch reads NLTGLESGGSSPP.

It is found in the mitochondrion. This is an uncharacterized protein from Arabidopsis thaliana (Mouse-ear cress).